The primary structure comprises 229 residues: Large ribosomal subunit protein uL1 (229 aa).

This sequence belongs to the universal ribosomal protein uL1 family. Part of the 50S ribosomal subunit.

Functionally, binds directly to 23S rRNA. The L1 stalk is quite mobile in the ribosome, and is involved in E site tRNA release. In terms of biological role, protein L1 is also a translational repressor protein, it controls the translation of the L11 operon by binding to its mRNA. The protein is Large ribosomal subunit protein uL1 of Streptococcus thermophilus (strain CNRZ 1066).